The following is a 268-amino-acid chain: AN1-type zinc finger protein 1 (268 aa).

At A2 the chain carries N-acetylalanine. 2 AN1-type zinc fingers span residues 4–52 and 58–106; these read LDIG…VINE and QHTS…IPKP. C10, C15, C25, C28, C33, H36, H42, C44, C64, C69, C79, C82, C87, H90, H96, and C98 together coordinate Zn(2+). The ubiquitin-like stretch occupies residues 160-260; sequence QTERIYFQVF…EYLNDEEQFC (101 aa).

Associates with the 26S proteasome; this association occurs upon exposure to arsenite and is reduced in the presence of ATP. Interacts (via AN1-type 1 and 2 zinc fingers) with PSMD1; this interaction is increased upon arsenite treatment and occurs in an ATP-independent manner. Interacts with PSMC4. Interacts with PSMA1. Interacts (via its ubiquitin-like region) with VCP; this interaction occurs in an arsenite-dependent manner and is necessary for the recruitment of the ubiquitin-selective ATPase VCP to stress granules (SGs).

The protein resides in the cytoplasm. The protein localises to the stress granule. In terms of biological role, plays a role in the regulation of cytoplasmic stress granules (SGs) turnover. SGs are dynamic and transient cytoplasmic ribonucleoprotein assemblies important for cellular protein homeostasis when protein production is suspended after acute exogenous stress. Associates with SGs and is involved in the efficient and specific arsenite-induced clearance process of SGs through the recruitment of the ubiquitin-selective ATPase VCP and the 26S proteasome. This process requires both complexes for efficient degradation of damaged ubiquitinated SG proteins during recovery from arsenite stress, and hence avoiding aberrant cytoplasmic SGs degradation via autophagy. This is AN1-type zinc finger protein 1 from Homo sapiens (Human).